The following is a 303-amino-acid chain: UDP-3-O-acyl-N-acetylglucosamine deacetylase (303 aa).

Zn(2+) contacts are provided by histidine 77, histidine 236, and aspartate 240. Histidine 263 acts as the Proton donor in catalysis.

Belongs to the LpxC family. Zn(2+) serves as cofactor.

It catalyses the reaction a UDP-3-O-[(3R)-3-hydroxyacyl]-N-acetyl-alpha-D-glucosamine + H2O = a UDP-3-O-[(3R)-3-hydroxyacyl]-alpha-D-glucosamine + acetate. Its pathway is glycolipid biosynthesis; lipid IV(A) biosynthesis; lipid IV(A) from (3R)-3-hydroxytetradecanoyl-[acyl-carrier-protein] and UDP-N-acetyl-alpha-D-glucosamine: step 2/6. Catalyzes the hydrolysis of UDP-3-O-myristoyl-N-acetylglucosamine to form UDP-3-O-myristoylglucosamine and acetate, the committed step in lipid A biosynthesis. The sequence is that of UDP-3-O-acyl-N-acetylglucosamine deacetylase from Ruthia magnifica subsp. Calyptogena magnifica.